We begin with the raw amino-acid sequence, 308 residues long: Ribosomal RNA small subunit methyltransferase H (308 aa).

Residues 32 to 34 (AGH), D51, F78, D99, and Q106 each bind S-adenosyl-L-methionine.

The protein belongs to the methyltransferase superfamily. RsmH family.

The protein localises to the cytoplasm. The catalysed reaction is cytidine(1402) in 16S rRNA + S-adenosyl-L-methionine = N(4)-methylcytidine(1402) in 16S rRNA + S-adenosyl-L-homocysteine + H(+). Its function is as follows. Specifically methylates the N4 position of cytidine in position 1402 (C1402) of 16S rRNA. The polypeptide is Ribosomal RNA small subunit methyltransferase H (Mesoplasma florum (strain ATCC 33453 / NBRC 100688 / NCTC 11704 / L1) (Acholeplasma florum)).